A 386-amino-acid chain; its full sequence is 2-deoxy-scyllo-inosose synthase (386 aa).

NAD(+) contacts are provided by residues Asp42, 73 to 76 (EVHK), 105 to 109 (GITGN), 129 to 130 (TT), 140 to 142 (SLK), and 151 to 152 (KN). The active site involves Lys142. Residue Glu184 coordinates Co(2+). Residue Glu244 is part of the active site. Co(2+) is bound by residues His247 and His263.

Belongs to the sugar phosphate cyclases superfamily. DOI synthase family. It depends on NAD(+) as a cofactor. Co(2+) is required as a cofactor.

It carries out the reaction D-glucose 6-phosphate = 2-deoxy-L-scyllo-inosose + phosphate. The protein operates within metabolic intermediate biosynthesis; 2-deoxystreptamine biosynthesis; 2-deoxystreptamine from D-glucose 6-phosphate: step 1/4. Its pathway is antibiotic biosynthesis; paromomycin biosynthesis. Functionally, catalyzes the intramolecular carbocycle formation from D-glucose-6-phosphate to 2-deoxy-scyllo-inosose (DOI). This Streptomyces paromomycinus (Streptomyces rimosus subsp. paromomycinus) protein is 2-deoxy-scyllo-inosose synthase (parC).